A 296-amino-acid chain; its full sequence is Phosphoribosylaminoimidazole-succinocarboxamide synthase (296 aa).

This sequence belongs to the SAICAR synthetase family.

The enzyme catalyses 5-amino-1-(5-phospho-D-ribosyl)imidazole-4-carboxylate + L-aspartate + ATP = (2S)-2-[5-amino-1-(5-phospho-beta-D-ribosyl)imidazole-4-carboxamido]succinate + ADP + phosphate + 2 H(+). Its pathway is purine metabolism; IMP biosynthesis via de novo pathway; 5-amino-1-(5-phospho-D-ribosyl)imidazole-4-carboxamide from 5-amino-1-(5-phospho-D-ribosyl)imidazole-4-carboxylate: step 1/2. This Thioalkalivibrio sulfidiphilus (strain HL-EbGR7) protein is Phosphoribosylaminoimidazole-succinocarboxamide synthase.